A 206-amino-acid chain; its full sequence is Alpha-S1-casein (206 aa).

An N-terminal signal peptide occupies residues 1–15 (MKLLIFICLAAVALA). 8 positions are modified to phosphoserine: Ser-33, Ser-77, Ser-78, Ser-79, Ser-80, Ser-81, Ser-82, and Ser-89. The segment at 67–106 (HGMEGHEQRGSSSSSSEEVVGNSAEQKHVQKEEDVPSQSY) is disordered. Positions 91 to 100 (EQKHVQKEED) are enriched in basic and acidic residues.

This sequence belongs to the alpha-casein family. As to expression, mammary gland specific. Secreted in milk.

The protein resides in the secreted. In terms of biological role, important role in the capacity of milk to transport calcium phosphate. In Sus scrofa (Pig), this protein is Alpha-S1-casein (CSN1S1).